The sequence spans 181 residues: 28 kDa heat- and acid-stable phosphoprotein (181 aa).

The segment covering 1 to 14 (MPKGGRKGGHKGRA) has biased composition (basic residues). The interval 1–117 (MPKGGRKGGH…SRREREEIEK (117 aa)) is disordered. Position 18 is a phosphothreonine (threonine 18). The residue at position 19 (serine 19) is a Phosphoserine. The span at 30 to 59 (EKQKAREEEEQKEGGDGAAGDPKKEKKSLD) shows a compositional bias: basic and acidic residues. Residue lysine 52 forms a Glycyl lysine isopeptide (Lys-Gly) (interchain with G-Cter in SUMO2) linkage. A phosphoserine mark is found at serine 57, serine 60, and serine 63. The span at 60-69 (SDESEDEEDD) shows a compositional bias: acidic residues. A Phosphotyrosine modification is found at tyrosine 70. Residues 102–117 (DGPKELSRREREEIEK) are compositionally biased toward basic and acidic residues. At lysine 126 the chain carries N6-methyllysine. An N6-acetyllysine mark is found at lysine 132 and lysine 164. A compositionally biased stretch (basic and acidic residues) spans 151 to 167 (EEAARKKEEERKAKDDA). Residues 151–181 (EEAARKKEEERKAKDDATLSGKRMQSLSLNK) are disordered. Phosphoserine occurs at positions 176 and 178.

Belongs to the PDAP1 family.

Functionally, enhances PDGFA-stimulated cell growth in fibroblasts, but inhibits the mitogenic effect of PDGFB. The chain is 28 kDa heat- and acid-stable phosphoprotein (PDAP1) from Homo sapiens (Human).